A 458-amino-acid polypeptide reads, in one-letter code: Carboxypeptidase N catalytic chain (458 aa).

An N-terminal signal peptide occupies residues Met1–Pro20. The Peptidase M14 domain maps to Arg24–Val338. A disulfide bridge links Cys42 with Cys104. Zn(2+) is bound by residues His86, Glu89, and His216. The cysteines at positions 271 and 311 are disulfide-linked. Glu308 (proton donor/acceptor) is an active-site residue. Thr400, Thr402, and Thr409 each carry an O-linked (GalNAc...) threonine glycan. The tract at residues Ser423 to Ala458 is disordered.

The protein belongs to the peptidase M14 family. As to quaternary structure, tetramer of two catalytic chains and two glycosylated inactive chains. Requires Zn(2+) as cofactor. In terms of tissue distribution, synthesized in the liver and secreted in plasma.

Its subcellular location is the secreted. The protein resides in the extracellular space. It catalyses the reaction Release of a C-terminal basic amino acid, preferentially lysine.. Protects the body from potent vasoactive and inflammatory peptides containing C-terminal Arg or Lys (such as kinins or anaphylatoxins) which are released into the circulation. This is Carboxypeptidase N catalytic chain (CPN1) from Homo sapiens (Human).